The sequence spans 165 residues: Alanine- and arginine-rich domain-containing protein (165 aa).

The interval 136–165 (QQLKKRQDQERASKPQSPQDEEMNPECGNA) is disordered.

The chain is Alanine- and arginine-rich domain-containing protein (Aard) from Rattus norvegicus (Rat).